Here is a 135-residue protein sequence, read N- to C-terminus: Congerin-1 (135 aa).

Ser-1 bears the N-acetylserine mark. The region spanning 3–135 (GLQVKNFDFT…GDARLTLVKE (133 aa)) is the Galectin domain. Residue 70–76 (WETEQRS) coordinates a beta-D-galactoside.

In terms of assembly, homodimer.

Functionally, this protein binds beta-galactoside. Its physiological function is not yet known. This chain is Congerin-1, found in Conger myriaster (Conger eel).